The chain runs to 674 residues: Probable copper-transporting P-type ATPase B (674 aa).

A disordered region spans residues 1–22 (MNHSNQMHHDNHESHNHHSGHA). Residues 7-16 (MHHDNHESHN) show a composition bias toward basic and acidic residues. Transmembrane regions (helical) follow at residues 32-52 (FFVS…MGVN), 57-77 (FTFP…FFYG), 95-115 (GMMT…LYAF), 127-147 (TMDF…GHWI), 284-304 (GYLF…WMLI), and 315-335 (LVTV…PLVT). D367 functions as the 4-aspartylphosphate intermediate in the catalytic mechanism. Mg(2+) contacts are provided by D565 and D569. A run of 2 helical transmembrane segments spans residues 623–645 (LWWG…AFIG) and 649–671 (SPAI…AFTL).

Belongs to the cation transport ATPase (P-type) (TC 3.A.3) family. Type IB subfamily.

It is found in the cell membrane. The catalysed reaction is Cu(+)(in) + ATP + H2O = Cu(+)(out) + ADP + phosphate + H(+). Its function is as follows. Involved in copper transport. The polypeptide is Probable copper-transporting P-type ATPase B (copB) (Staphylococcus epidermidis (strain ATCC 35984 / DSM 28319 / BCRC 17069 / CCUG 31568 / BM 3577 / RP62A)).